We begin with the raw amino-acid sequence, 970 residues long: MSKKRVHELGKQLKEQGIELSNQELVEKLLHLGYDVKSHSSSLEDDQAHAAYEKILAERKPKAAPARPSGPGFVVRKRAHVEPPPVQEAQPVEAQPSYEEQPSYEEQPSYEEQPSLEEPAEVAAEAAPEPVEEPASSPEGGAPAGGAEPQPAPEAPPPSAAPAMPAAPSAPPSPAVRPPAPSVPAGAQPPGAPVRPAAPGVRPAAPGVRPAAPGVRPTGPGVRPSVPGGPRAPGQPTAPMAAAPHGPGAQPGQPAAPGPDPRTLRPTATQAVVISRPLVPVRRVTPPTGARTQFPAAPGPRALGEVRELKVVPGSLGREREFIDVSRDKRRGRTPGRPMSEEQAKSLSGKELLQAAITDRAYIPIRGKKKKPTKKGAKTQITEKAEHKKVIRVEESISVSELSQAMGVKASDLIRKLMQAGTMATINQQIDADTAAFLATEFGYTLEKKGFEVEEYIPEVEVDESKLVIRPPVVTVMGHVDHGKTSLLDAIRQADVAAGEAGGITQHIGAYAVQTPQGPITFLDTPGHEAFTAMRQRGAQVTDLVVLVVAADDGVMPQTVESIKAAKAAGVTILVAINKIDKPGATPERVMQQLTEYELVAEQWGGSTIMLPVSARTKQGIPELLEYIALQSEVLELKANPEMLASGRVIEAKLEKGRGPVATVLVEEGTLRVGDALVTGIHYGRVRAMMNERGEQVKEVPPGYPVEVLGLSGVPVAGDEFDVVQDEKAAKEVAEHRAEKQRKKELGASRKATLEDLFAKAKSGGGKVLNVVVKADVQGSSEAVTQALQKAATKKVGVKILDSGVGAITKSDVLTAAAGNGIIVGFNTKPESEIESIASQQGVKILLFDIIYEAVDKIREEMAGLLEPIIREKPLGKAEVRALFSIPKLGNIAGSAVTEGVIKRAANVRVLRDRKVVYSGKIGSLKRLKDDVREVQTGFECGIGIEGFSDVKPGDVIEAYELEEIRQSLD.

2 disordered regions span residues 54–270 and 328–348; these read KILA…TATQ and DKRRGRTPGRPMSEEQAKSLS. Low complexity predominate over residues 87 to 96; sequence QEAQPVEAQP. The segment covering 98 to 112 has biased composition (polar residues); sequence YEEQPSYEEQPSYEE. Positions 121–149 are enriched in low complexity; the sequence is EVAAEAAPEPVEEPASSPEGGAPAGGAEP. Pro residues-rich tracts occupy residues 150-160 and 168-182; these read QPAPEAPPPSA and PSAPPSPAVRPPAPS. Low complexity predominate over residues 183–253; it reads VPAGAQPPGA…PHGPGAQPGQ (71 aa). Residues 469-638 enclose the tr-type G domain; it reads IRPPVVTVMG…ALQSEVLELK (170 aa). Residues 478–485 form a G1 region; that stretch reads GHVDHGKT. 478–485 serves as a coordination point for GTP; the sequence is GHVDHGKT. Residues 503 to 507 are G2; that stretch reads GITQH. The tract at residues 524–527 is G3; sequence DTPG. Residues 524–528 and 578–581 contribute to the GTP site; these read DTPGH and NKID. Positions 578–581 are G4; that stretch reads NKID. The interval 614 to 616 is G5; that stretch reads SAR.

This sequence belongs to the TRAFAC class translation factor GTPase superfamily. Classic translation factor GTPase family. IF-2 subfamily.

It localises to the cytoplasm. Functionally, one of the essential components for the initiation of protein synthesis. Protects formylmethionyl-tRNA from spontaneous hydrolysis and promotes its binding to the 30S ribosomal subunits. Also involved in the hydrolysis of GTP during the formation of the 70S ribosomal complex. This chain is Translation initiation factor IF-2, found in Anaeromyxobacter sp. (strain Fw109-5).